The chain runs to 217 residues: Octanoyltransferase (217 aa).

The 180-residue stretch at 35–214 folds into the BPL/LPL catalytic domain; sequence DEAGERIWLL…TLPAFLDKLR (180 aa). Substrate is bound by residues 73-80, 145-147, and 158-160; these read RGGRYTYH, AIG, and GFS. Cys176 functions as the Acyl-thioester intermediate in the catalytic mechanism.

This sequence belongs to the LipB family.

The protein localises to the cytoplasm. It carries out the reaction octanoyl-[ACP] + L-lysyl-[protein] = N(6)-octanoyl-L-lysyl-[protein] + holo-[ACP] + H(+). It participates in protein modification; protein lipoylation via endogenous pathway; protein N(6)-(lipoyl)lysine from octanoyl-[acyl-carrier-protein]: step 1/2. Its function is as follows. Catalyzes the transfer of endogenously produced octanoic acid from octanoyl-acyl-carrier-protein onto the lipoyl domains of lipoate-dependent enzymes. Lipoyl-ACP can also act as a substrate although octanoyl-ACP is likely to be the physiological substrate. This chain is Octanoyltransferase, found in Sphingopyxis alaskensis (strain DSM 13593 / LMG 18877 / RB2256) (Sphingomonas alaskensis).